Reading from the N-terminus, the 610-residue chain is MARMSTNSTTPLSHIRNFSIVAHIDHGKSTLADRLIQTTGGLAEREMSEQVLDNMDIERERGITIKAQTVRLHYQANNGEKYILNLIDTPGHVDFAYEVSRSLSACEGSLLVVDASQGVEAQTLANVYQAIDNNHELVTVLNKIDLPAAEPDRIKEQIEEVIGIDASEAVLISAKTGLGIPDVLEAIVRKLPAPKSPGGEKAPLKALLVDSWYDTYLGVMVLVRIIDGVLTKGQTIRMMGTDAKYQVERVGVLTPKMVNVDSLGPGEIGFITASIKEVADTRVGDTITEDKRPTAQALPGFKPAQPVVFCGLFPVDAADFEDLRAAMGKLRLNDASFSFEMESSAALGFGFRCGFLGLLHLEIIQERLEREFDLDLIATAPSVVYKMYMTDGTERELHNPADMPDVVKISEIHEPWIRATILTPDDYLGGILKLCQDRRGIQIELTYVGTRAMLTYDLPLNEVVFDFYDRLKSISKGYASFDYTLTDHREGNLVKMSILVNGEPVDALSMMVHRTAAEKRGRDMCEKLKELIPKHMFKIPIQAAIGGNVIARETISALRKDVTAKCYGGDATRKRKLLDKQKAGKKRMRQFGKVEIPQEAFIAALKMGDE.

Positions serine 13–lysine 195 constitute a tr-type G domain. GTP-binding positions include aspartate 25–threonine 30 and asparagine 142–aspartate 145.

Belongs to the TRAFAC class translation factor GTPase superfamily. Classic translation factor GTPase family. LepA subfamily.

The protein localises to the cell inner membrane. The catalysed reaction is GTP + H2O = GDP + phosphate + H(+). Required for accurate and efficient protein synthesis under certain stress conditions. May act as a fidelity factor of the translation reaction, by catalyzing a one-codon backward translocation of tRNAs on improperly translocated ribosomes. Back-translocation proceeds from a post-translocation (POST) complex to a pre-translocation (PRE) complex, thus giving elongation factor G a second chance to translocate the tRNAs correctly. Binds to ribosomes in a GTP-dependent manner. In Rhizobium etli (strain CIAT 652), this protein is Elongation factor 4.